The chain runs to 330 residues: Phosphate acyltransferase (330 aa).

It belongs to the PlsX family. In terms of assembly, homodimer. Probably interacts with PlsY.

The protein localises to the cytoplasm. The catalysed reaction is a fatty acyl-[ACP] + phosphate = an acyl phosphate + holo-[ACP]. The protein operates within lipid metabolism; phospholipid metabolism. In terms of biological role, catalyzes the reversible formation of acyl-phosphate (acyl-PO(4)) from acyl-[acyl-carrier-protein] (acyl-ACP). This enzyme utilizes acyl-ACP as fatty acyl donor, but not acyl-CoA. In Bacillus cereus (strain B4264), this protein is Phosphate acyltransferase.